The primary structure comprises 98 residues: DNA-binding protein Fis (98 aa).

Residues 74 to 93 (QTRAAQMMGINRGTLRKKLK) constitute a DNA-binding region (H-T-H motif).

The protein belongs to the transcriptional regulatory Fis family. In terms of assembly, homodimer.

Its function is as follows. Activates ribosomal RNA transcription. Plays a direct role in upstream activation of rRNA promoters. The polypeptide is DNA-binding protein Fis (Proteus hauseri).